Here is a 437-residue protein sequence, read N- to C-terminus: Serine--tRNA ligase (437 aa).

240 to 242 contributes to the L-serine binding site; sequence TAE. Residue 271-273 participates in ATP binding; that stretch reads RAE. Glutamate 294 provides a ligand contact to L-serine. ATP is bound at residue 358–361; it reads EISS. Serine 394 contributes to the L-serine binding site.

The protein belongs to the class-II aminoacyl-tRNA synthetase family. Type-1 seryl-tRNA synthetase subfamily. In terms of assembly, homodimer. The tRNA molecule binds across the dimer.

It localises to the cytoplasm. The catalysed reaction is tRNA(Ser) + L-serine + ATP = L-seryl-tRNA(Ser) + AMP + diphosphate + H(+). It carries out the reaction tRNA(Sec) + L-serine + ATP = L-seryl-tRNA(Sec) + AMP + diphosphate + H(+). It functions in the pathway aminoacyl-tRNA biosynthesis; selenocysteinyl-tRNA(Sec) biosynthesis; L-seryl-tRNA(Sec) from L-serine and tRNA(Sec): step 1/1. Catalyzes the attachment of serine to tRNA(Ser). Is also able to aminoacylate tRNA(Sec) with serine, to form the misacylated tRNA L-seryl-tRNA(Sec), which will be further converted into selenocysteinyl-tRNA(Sec). This chain is Serine--tRNA ligase, found in Methylobacterium nodulans (strain LMG 21967 / CNCM I-2342 / ORS 2060).